The following is a 271-amino-acid chain: Mannosyl-3-phosphoglycerate phosphatase (271 aa).

D13 (nucleophile) is an active-site residue. D13, D15, and D214 together coordinate Mg(2+).

It belongs to the HAD-like hydrolase superfamily. MPGP family. Mg(2+) is required as a cofactor.

The protein localises to the cytoplasm. It catalyses the reaction 2-O-(alpha-D-mannosyl)-3-phosphoglycerate + H2O = (2R)-2-O-(alpha-D-mannosyl)-glycerate + phosphate. The protein is Mannosyl-3-phosphoglycerate phosphatase (yedP) of Salmonella choleraesuis (strain SC-B67).